The primary structure comprises 482 residues: tRNA sulfurtransferase (482 aa).

One can recognise a THUMP domain in the interval 61–165 (QQVLEILTTT…DDKLNQILAH (105 aa)). Residues 183–184 (LI), K265, G287, and Q296 each bind ATP. A disulfide bond links C344 and C456. Residues 404 to 482 (IEEHAVVLDI…GFNNVKVYRP (79 aa)) enclose the Rhodanese domain. C456 (cysteine persulfide intermediate) is an active-site residue.

Belongs to the ThiI family.

The protein resides in the cytoplasm. It carries out the reaction [ThiI sulfur-carrier protein]-S-sulfanyl-L-cysteine + a uridine in tRNA + 2 reduced [2Fe-2S]-[ferredoxin] + ATP + H(+) = [ThiI sulfur-carrier protein]-L-cysteine + a 4-thiouridine in tRNA + 2 oxidized [2Fe-2S]-[ferredoxin] + AMP + diphosphate. The enzyme catalyses [ThiS sulfur-carrier protein]-C-terminal Gly-Gly-AMP + S-sulfanyl-L-cysteinyl-[cysteine desulfurase] + AH2 = [ThiS sulfur-carrier protein]-C-terminal-Gly-aminoethanethioate + L-cysteinyl-[cysteine desulfurase] + A + AMP + 2 H(+). It participates in cofactor biosynthesis; thiamine diphosphate biosynthesis. In terms of biological role, catalyzes the ATP-dependent transfer of a sulfur to tRNA to produce 4-thiouridine in position 8 of tRNAs, which functions as a near-UV photosensor. Also catalyzes the transfer of sulfur to the sulfur carrier protein ThiS, forming ThiS-thiocarboxylate. This is a step in the synthesis of thiazole, in the thiamine biosynthesis pathway. The sulfur is donated as persulfide by IscS. This chain is tRNA sulfurtransferase, found in Vibrio vulnificus (strain CMCP6).